The following is a 117-amino-acid chain: Anti-sigma F factor antagonist (117 aa).

Residues 3-113 (LGIDMNVKES…QSEQQALLTL (111 aa)) enclose the STAS domain. Ser58 is modified (phosphoserine).

The protein belongs to the anti-sigma-factor antagonist family. Phosphorylated by SpoIIAB on a serine residue.

In the phosphorylated form it could act as an anti-anti-sigma factor that counteracts SpoIIAB and thus releases sigma f from inhibition. The sequence is that of Anti-sigma F factor antagonist (spoIIAA) from Bacillus subtilis (strain 168).